Consider the following 60-residue polypeptide: Large ribosomal subunit protein bL32 (60 aa).

The interval 1 to 60 (MAVQQNKKTPSKRGMHRSHDFLVAPQLSVEPTTGETHMRHHISPNGFYRGRKVLKTKNDE) is disordered. Basic residues predominate over residues 49 to 60 (RGRKVLKTKNDE).

This sequence belongs to the bacterial ribosomal protein bL32 family.

The chain is Large ribosomal subunit protein bL32 from Janthinobacterium sp. (strain Marseille) (Minibacterium massiliensis).